A 249-amino-acid polypeptide reads, in one-letter code: Ribosomal RNA small subunit methyltransferase J (249 aa).

Residues 101 to 102 (RD), 117 to 118 (ER), 153 to 154 (SS), and Asp-171 contribute to the S-adenosyl-L-methionine site.

The protein belongs to the methyltransferase superfamily. RsmJ family.

The protein localises to the cytoplasm. The enzyme catalyses guanosine(1516) in 16S rRNA + S-adenosyl-L-methionine = N(2)-methylguanosine(1516) in 16S rRNA + S-adenosyl-L-homocysteine + H(+). Its function is as follows. Specifically methylates the guanosine in position 1516 of 16S rRNA. The polypeptide is Ribosomal RNA small subunit methyltransferase J (Salmonella arizonae (strain ATCC BAA-731 / CDC346-86 / RSK2980)).